Here is a 574-residue protein sequence, read N- to C-terminus: MAEHEEQPYEGNGNGGDPAPASAYAEYPAPEGSPPAAAAKPTGFSDGATDGGRSQHETQPHDGRSSKSRERERERDKDKERDRDRDRDRRDRDRGDKDRDRDRHREHRDRSERREHHDRERSDDRDRRRGHDSERRRDRDRDGHRRHRSRSRSPSKGRDRRSRSRSRSRSSKRVSGFDQGPQAAIPALAAGAAPGQVPVVAPAISGMLPNMFNLTQTPFTPLVIQPQAMTQQATRHARRVYVGGLPPTANEHTVAVYFNQVMAAVGGNTAGPGDAVLNVYINHDKKFAFVEMRSVEEASNAMALDGIMFEGAPVKVRRPTDYNPSLAAALGPSQPNPNLNLAAVGLTPGSAGGLEGPDRIFVGGLPYYFTEAQVRELLESFGPLRGFDLVKDRETGNSKGYAFCVYQDLNVTDIACAALNGIKMGDKTLTVRRANQGASQPRPEQESMLLHVQQQAQMQKLMFQVGGGALPTKVVCLTQVVSPDELRDDEEYEDIVQDMREEGCRYGNLVKVVIPRPDPSGAPVAGVGRVFLEFADVESSTKAKNGMHGRKFANNQVVAVFYPEDKFAEGQYDG.

The interval 1–180 is disordered; it reads MAEHEEQPYE…SKRVSGFDQG (180 aa). A compositionally biased stretch (low complexity) spans 18–41; it reads PAPASAYAEYPAPEGSPPAAAAKP. Residues 53–143 are compositionally biased toward basic and acidic residues; sequence RSQHETQPHD…ERRRDRDRDG (91 aa). Residues 144–172 are compositionally biased toward basic residues; sequence HRRHRSRSRSPSKGRDRRSRSRSRSRSSK. RRM domains follow at residues 238–321, 358–436, and 479–565; these read RRVY…RPTD, DRIF…RANQ, and QVVS…YPED.

Belongs to the splicing factor SR family.

It is found in the nucleus. In terms of biological role, necessary for the splicing of pre-mRNA. The polypeptide is Splicing factor U2af large subunit A (U2AF65A) (Oryza sativa subsp. japonica (Rice)).